The chain runs to 332 residues: Small ribosomal subunit biogenesis GTPase RsgA (332 aa).

In terms of domain architecture, CP-type G spans 103-259 (RQQLIAANLD…LIDTPGMREL (157 aa)). GTP is bound by residues 148-151 (TKVD) and 201-209 (GSSGAGKST). Positions 281, 286, 288, and 294 each coordinate Zn(2+).

This sequence belongs to the TRAFAC class YlqF/YawG GTPase family. RsgA subfamily. In terms of assembly, monomer. Associates with 30S ribosomal subunit, binds 16S rRNA. Zn(2+) serves as cofactor.

Its subcellular location is the cytoplasm. Its function is as follows. One of several proteins that assist in the late maturation steps of the functional core of the 30S ribosomal subunit. Helps release RbfA from mature subunits. May play a role in the assembly of ribosomal proteins into the subunit. Circularly permuted GTPase that catalyzes slow GTP hydrolysis, GTPase activity is stimulated by the 30S ribosomal subunit. In Xylella fastidiosa (strain M12), this protein is Small ribosomal subunit biogenesis GTPase RsgA.